Here is a 292-residue protein sequence, read N- to C-terminus: MSWLQVKVLTDEAGAAALEQIFEGLGALSVTMLDAADDPVLEPDLGTTPLWRNTQVVALFSADTSAEMVREQLERNQIAAADIECEVIEDRDWEREWMTHFHPMRFGSRLWICPSWGEPEDPNGVNLLLDPGLAFGTGTHPTTALCLTWLDSQQLQGKQVIDFGCGSGVLAIAALLLGADHATGTDIDPQALEASRDNAERNSVSEGLTLHFPEQMPEMQAEVVIANILANPLISLAPKLATLTLPGGSIALSGILKDQEEAVAEAYRNYFELDPTEYKEDWVLISGRRLPY.

S-adenosyl-L-methionine contacts are provided by threonine 143, glycine 164, aspartate 186, and asparagine 227.

It belongs to the methyltransferase superfamily. PrmA family.

The protein resides in the cytoplasm. The catalysed reaction is L-lysyl-[protein] + 3 S-adenosyl-L-methionine = N(6),N(6),N(6)-trimethyl-L-lysyl-[protein] + 3 S-adenosyl-L-homocysteine + 3 H(+). Methylates ribosomal protein L11. This chain is Ribosomal protein L11 methyltransferase, found in Hahella chejuensis (strain KCTC 2396).